A 207-amino-acid chain; its full sequence is Outer-membrane lipoprotein LolB (207 aa).

The N-terminal stretch at 1–21 (MTLPDFRLIRLLPLASLVLTA) is a signal peptide. Cys22 carries the N-palmitoyl cysteine lipid modification. A lipid anchor (S-diacylglycerol cysteine) is attached at Cys22.

Belongs to the LolB family. As to quaternary structure, monomer.

The protein resides in the cell outer membrane. Its function is as follows. Plays a critical role in the incorporation of lipoproteins in the outer membrane after they are released by the LolA protein. The sequence is that of Outer-membrane lipoprotein LolB from Salmonella schwarzengrund (strain CVM19633).